The sequence spans 103 residues: Small ribosomal subunit protein uS10 (103 aa).

Belongs to the universal ribosomal protein uS10 family. Part of the 30S ribosomal subunit.

Its function is as follows. Involved in the binding of tRNA to the ribosomes. The sequence is that of Small ribosomal subunit protein uS10 from Psychromonas ingrahamii (strain DSM 17664 / CCUG 51855 / 37).